The sequence spans 359 residues: Oxopyrrolidines biosynthesis cluster protein G (359 aa).

The disordered stretch occupies residues 1–32; it reads MDHLRDSLLSSLPRDSPSIGAMDYARRDREST. Low complexity predominate over residues 7–18; sequence SLLSSLPRDSPS.

Part of the gene cluster that mediates the biosynthesis of oxopyrrolidines, polyketide-amino acid hybrid compounds with feature structures of tetramic acid. Does not seem to play a role in oxopyrrolidines A and B biosynthesis. In Penicillium oxalicum (strain 114-2 / CGMCC 5302) (Penicillium decumbens), this protein is Oxopyrrolidines biosynthesis cluster protein G.